The following is an 893-amino-acid chain: Desmocollin-1 (893 aa).

An N-terminal signal peptide occupies residues 1-29; it reads MAVASAAPGSIFWKQLLFSLLVLILFCDA. A propeptide spanning residues 30 to 132 is cleaved from the precursor; sequence CQKISLQVPS…KDAVLRRTKR (103 aa). Cadherin domains are found at residues 133-240, 241-352, 353-470, 471-574, and 575-682; these read RWAP…APYF, ENKL…APYF, TETS…GPEC, QPPV…DHPP, and QIKQ…LSRE. At 133 to 692 the chain is on the extracellular side; sequence RWAPIPCSLM…AALANVFLGK (560 aa). Asn-163 is a glycosylation site (N-linked (GlcNAc...) asparagine). Phosphothreonine is present on Thr-383. Residues Asn-398 and Asn-545 are each glycosylated (N-linked (GlcNAc...) asparagine). Residues 693 to 715 traverse the membrane as a helical segment; that stretch reads WAILAMVLGSVLLLCILFTCFCV. At 716–893 the chain is on the cytoplasmic side; that stretch reads TVKKTVKKCF…RTLAKTCVKK (178 aa).

As to quaternary structure, binds to JUP/plakoglobin. Isoform 1A is phosphorylated on a serine but isoform 1B is not. In terms of tissue distribution, epidermis and weakly in tongue papillae.

The protein resides in the cell membrane. It localises to the cell junction. It is found in the desmosome. In terms of biological role, a component of desmosome cell-cell junctions which are required for positive regulation of cellular adhesion. Required for desmosome adhesion strength between the granular layers of the epidermis, as a result moderates epidermal proliferation and differentiation. Is therefore required to maintain postnatal epidermal barrier function and normal hair follicle morphology into adulthood. This chain is Desmocollin-1 (DSC1), found in Bos taurus (Bovine).